Consider the following 142-residue polypeptide: FAD synthase (142 aa).

ATP-binding positions include 9 to 10 (VF), 14 to 17 (HLGH), Asp-93, and Tyr-120.

Belongs to the archaeal FAD synthase family. Homodimer. It depends on a divalent metal cation as a cofactor.

The catalysed reaction is FMN + ATP + H(+) = FAD + diphosphate. It functions in the pathway cofactor biosynthesis; FAD biosynthesis; FAD from FMN: step 1/1. Its function is as follows. Catalyzes the transfer of the AMP portion of ATP to flavin mononucleotide (FMN) to produce flavin adenine dinucleotide (FAD) coenzyme. The protein is FAD synthase (ribL) of Thermoplasma volcanium (strain ATCC 51530 / DSM 4299 / JCM 9571 / NBRC 15438 / GSS1).